Reading from the N-terminus, the 126-residue chain is Aspartate 1-decarboxylase (126 aa).

S25 acts as the Schiff-base intermediate with substrate; via pyruvic acid in catalysis. Residue S25 is modified to Pyruvic acid (Ser). Position 57 (T57) interacts with substrate. Catalysis depends on Y58, which acts as the Proton donor. Position 73–75 (73–75 (GAA)) interacts with substrate.

The protein belongs to the PanD family. Heterooctamer of four alpha and four beta subunits. Pyruvate is required as a cofactor. In terms of processing, is synthesized initially as an inactive proenzyme, which is activated by self-cleavage at a specific serine bond to produce a beta-subunit with a hydroxyl group at its C-terminus and an alpha-subunit with a pyruvoyl group at its N-terminus.

The protein resides in the cytoplasm. It catalyses the reaction L-aspartate + H(+) = beta-alanine + CO2. It functions in the pathway cofactor biosynthesis; (R)-pantothenate biosynthesis; beta-alanine from L-aspartate: step 1/1. Functionally, catalyzes the pyruvoyl-dependent decarboxylation of aspartate to produce beta-alanine. The protein is Aspartate 1-decarboxylase of Methylococcus capsulatus (strain ATCC 33009 / NCIMB 11132 / Bath).